The following is a 733-amino-acid chain: Catalase-peroxidase (733 aa).

Residues 1 to 24 (MTDDSTCPVTGGADKQVTGRGQSY) form a disordered region. The segment at residues 96 to 219 (WHSAGTYRTL…LAAVQMGLIY (124 aa)) is a cross-link (tryptophyl-tyrosyl-methioninium (Trp-Tyr) (with M-245)). Catalysis depends on His-97, which acts as the Proton acceptor. The tryptophyl-tyrosyl-methioninium (Tyr-Met) (with W-96) cross-link spans 219–245 (YVNPEGPNGKPDPVAAAKDIRETFARM). His-260 contacts heme b.

Belongs to the peroxidase family. Peroxidase/catalase subfamily. Homodimer or homotetramer. It depends on heme b as a cofactor. Post-translationally, formation of the three residue Trp-Tyr-Met cross-link is important for the catalase, but not the peroxidase activity of the enzyme.

It carries out the reaction H2O2 + AH2 = A + 2 H2O. It catalyses the reaction 2 H2O2 = O2 + 2 H2O. In terms of biological role, bifunctional enzyme with both catalase and broad-spectrum peroxidase activity. This chain is Catalase-peroxidase, found in Methanoregula boonei (strain DSM 21154 / JCM 14090 / 6A8).